Here is a 101-residue protein sequence, read N- to C-terminus: Large ribosomal subunit protein uL23 (101 aa).

The protein belongs to the universal ribosomal protein uL23 family. As to quaternary structure, part of the 50S ribosomal subunit. Contacts protein L29, and trigger factor when it is bound to the ribosome.

One of the early assembly proteins it binds 23S rRNA. One of the proteins that surrounds the polypeptide exit tunnel on the outside of the ribosome. Forms the main docking site for trigger factor binding to the ribosome. The polypeptide is Large ribosomal subunit protein uL23 (Tolumonas auensis (strain DSM 9187 / NBRC 110442 / TA 4)).